We begin with the raw amino-acid sequence, 132 residues long: Small ribosomal subunit protein uS8 (132 aa).

This sequence belongs to the universal ribosomal protein uS8 family. In terms of assembly, part of the 30S ribosomal subunit. Contacts proteins S5 and S12.

In terms of biological role, one of the primary rRNA binding proteins, it binds directly to 16S rRNA central domain where it helps coordinate assembly of the platform of the 30S subunit. This chain is Small ribosomal subunit protein uS8, found in Syntrophotalea carbinolica (strain DSM 2380 / NBRC 103641 / GraBd1) (Pelobacter carbinolicus).